The following is a 264-amino-acid chain: Proteasome subunit beta type-4 (264 aa).

M1 carries the post-translational modification N-acetylmethionine. A propeptide spanning residues 1–45 (MEALLESRSGLWAGGPAPGQFYRIPPTPGSSVDPVSALYGSPITR) is cleaved from the precursor. Residue Y102 is modified to Phosphotyrosine.

The protein belongs to the peptidase T1B family. In terms of assembly, the 26S proteasome consists of a 20S proteasome core and two 19S regulatory subunits. The 20S proteasome core is a barrel-shaped complex made of 28 subunits that are arranged in four stacked rings. The two outer rings are each formed by seven alpha subunits, and the two inner rings are formed by seven beta subunits. The proteolytic activity is exerted by three beta-subunits PSMB5, PSMB6 and PSMB7. Forms a ternary complex with SMAD1 and OAZ1 before PSMB4 is incorporated into the 20S proteasome. Interacts with PRPF19.

It localises to the cytoplasm. It is found in the nucleus. Functionally, non-catalytic component of the 20S core proteasome complex involved in the proteolytic degradation of most intracellular proteins. This complex plays numerous essential roles within the cell by associating with different regulatory particles. Associated with two 19S regulatory particles, forms the 26S proteasome and thus participates in the ATP-dependent degradation of ubiquitinated proteins. The 26S proteasome plays a key role in the maintenance of protein homeostasis by removing misfolded or damaged proteins that could impair cellular functions, and by removing proteins whose functions are no longer required. Associated with the PA200 or PA28, the 20S proteasome mediates ubiquitin-independent protein degradation. This type of proteolysis is required in several pathways including spermatogenesis (20S-PA200 complex) or generation of a subset of MHC class I-presented antigenic peptides (20S-PA28 complex). SMAD1/OAZ1/PSMB4 complex mediates the degradation of the CREBBP/EP300 repressor SNIP1. The protein is Proteasome subunit beta type-4 (PSMB4) of Bos taurus (Bovine).